The primary structure comprises 143 residues: SsrA-binding protein (143 aa).

It belongs to the SmpB family.

Its subcellular location is the cytoplasm. Required for rescue of stalled ribosomes mediated by trans-translation. Binds to transfer-messenger RNA (tmRNA), required for stable association of tmRNA with ribosomes. tmRNA and SmpB together mimic tRNA shape, replacing the anticodon stem-loop with SmpB. tmRNA is encoded by the ssrA gene; the 2 termini fold to resemble tRNA(Ala) and it encodes a 'tag peptide', a short internal open reading frame. During trans-translation Ala-aminoacylated tmRNA acts like a tRNA, entering the A-site of stalled ribosomes, displacing the stalled mRNA. The ribosome then switches to translate the ORF on the tmRNA; the nascent peptide is terminated with the 'tag peptide' encoded by the tmRNA and targeted for degradation. The ribosome is freed to recommence translation, which seems to be the essential function of trans-translation. In Deinococcus geothermalis (strain DSM 11300 / CIP 105573 / AG-3a), this protein is SsrA-binding protein.